A 420-amino-acid polypeptide reads, in one-letter code: Phospholipase A1-II 3 (420 aa).

An N-terminal signal peptide occupies residues 1–21 (MCCFLLVSVLLATTLTDVASA). N-linked (GlcNAc...) asparagine glycosylation is present at asparagine 231. The active-site Acyl-ester intermediate is serine 240. Serine 240 acts as the Charge relay system in catalysis. An N-linked (GlcNAc...) asparagine glycan is attached at asparagine 294. Residues aspartate 305 and histidine 343 each act as charge relay system in the active site. A coiled-coil region spans residues 367 to 388 (VVDRDLALVNKEVDALRDEYQV). Asparagine 403 carries an N-linked (GlcNAc...) asparagine glycan.

Belongs to the AB hydrolase superfamily. Lipase family.

It is found in the secreted. Acylhydrolase that catalyzes the hydrolysis of phospholipids at the sn-1 position. This is Phospholipase A1-II 3 from Oryza sativa subsp. indica (Rice).